Reading from the N-terminus, the 463-residue chain is Ataxin-10 homolog (463 aa).

Belongs to the ataxin-10 family.

The protein localises to the cytoplasm. May play a role in the regulation of cytokinesis. The chain is Ataxin-10 homolog (CTR86) from Candida albicans (strain SC5314 / ATCC MYA-2876) (Yeast).